Consider the following 946-residue polypeptide: C-1-tetrahydrofolate synthase, cytoplasmic (946 aa).

The tract at residues 2-319 (AGQVLDGKAC…PPLPLKLLTP (318 aa)) is methylenetetrahydrofolate dehydrogenase and cyclohydrolase. Residues 51–55 (YVRMK) and 98–100 (VQL) each bind substrate. 169 to 171 (GRS) contacts NADP(+). A Phosphoserine modification is found at Ser176. Residue Ser194 participates in NADP(+) binding. Residue 277 to 281 (PGGVG) participates in substrate binding. Thr318 carries the phosphothreonine modification. Residues 320–946 (VPSDIDISRA…DDDGEIDGLF (627 aa)) are formyltetrahydrofolate synthetase. A Phosphoserine modification is found at Ser322. Residue 384 to 391 (TPLGEGKS) participates in ATP binding.

It in the N-terminal section; belongs to the tetrahydrofolate dehydrogenase/cyclohydrolase family. The protein in the C-terminal section; belongs to the formate--tetrahydrofolate ligase family. As to quaternary structure, homodimer.

Its subcellular location is the cytoplasm. The protein localises to the nucleus. The enzyme catalyses (6R)-5,10-methylene-5,6,7,8-tetrahydrofolate + NADP(+) = (6R)-5,10-methenyltetrahydrofolate + NADPH. The catalysed reaction is (6R)-5,10-methenyltetrahydrofolate + H2O = (6R)-10-formyltetrahydrofolate + H(+). It carries out the reaction (6S)-5,6,7,8-tetrahydrofolate + formate + ATP = (6R)-10-formyltetrahydrofolate + ADP + phosphate. The protein operates within one-carbon metabolism; tetrahydrofolate interconversion. Cytoplasmic isozyme of C-1-tetrahydrofolate synthase. The trifunctional enzyme catalyzes the interconversion of the one-carbon derivatives of tetrahydrofolate (THF) between different oxidation states by the enzymatic activities 10-formyltetrahydrofolate synthetase, 5,lO-methenyltetrahydrofolate cyclohydrolase, and 5,lO-methylenetetrahydrofolate dehydrogenase. Involved in the generation of one-carbon intermediates in the biosynthesis of the purine bases. This chain is C-1-tetrahydrofolate synthase, cytoplasmic (ADE3), found in Saccharomyces cerevisiae (strain ATCC 204508 / S288c) (Baker's yeast).